Here is a 34-residue protein sequence, read N- to C-terminus: MNDQMFVETLIITSSFFAIAVVLVLSVLLIERTG.

A helical transmembrane segment spans residues 10 to 30 (LIITSSFFAIAVVLVLSVLLI).

Its subcellular location is the membrane. This is an uncharacterized protein from Escherichia coli O157:H7.